A 153-amino-acid polypeptide reads, in one-letter code: Endoribonuclease YbeY (153 aa).

Residues His119, His123, and His129 each coordinate Zn(2+).

It belongs to the endoribonuclease YbeY family. It depends on Zn(2+) as a cofactor.

The protein resides in the cytoplasm. Functionally, single strand-specific metallo-endoribonuclease involved in late-stage 70S ribosome quality control and in maturation of the 3' terminus of the 16S rRNA. In Desulforamulus reducens (strain ATCC BAA-1160 / DSM 100696 / MI-1) (Desulfotomaculum reducens), this protein is Endoribonuclease YbeY.